The following is a 290-amino-acid chain: Bifunctional protein FolD (290 aa).

Residues 166–168 (GQS), serine 191, and isoleucine 232 each bind NADP(+).

This sequence belongs to the tetrahydrofolate dehydrogenase/cyclohydrolase family. Homodimer.

It carries out the reaction (6R)-5,10-methylene-5,6,7,8-tetrahydrofolate + NADP(+) = (6R)-5,10-methenyltetrahydrofolate + NADPH. It catalyses the reaction (6R)-5,10-methenyltetrahydrofolate + H2O = (6R)-10-formyltetrahydrofolate + H(+). It functions in the pathway one-carbon metabolism; tetrahydrofolate interconversion. Its function is as follows. Catalyzes the oxidation of 5,10-methylenetetrahydrofolate to 5,10-methenyltetrahydrofolate and then the hydrolysis of 5,10-methenyltetrahydrofolate to 10-formyltetrahydrofolate. The sequence is that of Bifunctional protein FolD from Halorhodospira halophila (strain DSM 244 / SL1) (Ectothiorhodospira halophila (strain DSM 244 / SL1)).